Reading from the N-terminus, the 98-residue chain is Large ribosomal subunit protein eL21 (98 aa).

Belongs to the eukaryotic ribosomal protein eL21 family.

In Korarchaeum cryptofilum (strain OPF8), this protein is Large ribosomal subunit protein eL21.